Reading from the N-terminus, the 279-residue chain is Tryptophan synthase alpha chain (279 aa).

Active-site proton acceptor residues include Glu-50 and Asp-61.

This sequence belongs to the TrpA family. As to quaternary structure, tetramer of two alpha and two beta chains.

The enzyme catalyses (1S,2R)-1-C-(indol-3-yl)glycerol 3-phosphate + L-serine = D-glyceraldehyde 3-phosphate + L-tryptophan + H2O. The protein operates within amino-acid biosynthesis; L-tryptophan biosynthesis; L-tryptophan from chorismate: step 5/5. Functionally, the alpha subunit is responsible for the aldol cleavage of indoleglycerol phosphate to indole and glyceraldehyde 3-phosphate. In Rhizobium etli (strain ATCC 51251 / DSM 11541 / JCM 21823 / NBRC 15573 / CFN 42), this protein is Tryptophan synthase alpha chain.